Consider the following 233-residue polypeptide: Ribonuclease 3 (233 aa).

An RNase III domain is found at 4-126 (LNKLMERLGH…IVGAIYIDAG (123 aa)). E39 provides a ligand contact to Mg(2+). D43 is a catalytic residue. Mg(2+) contacts are provided by D112 and E115. E115 is a catalytic residue. Residues 153–222 (DAKSLLQEWL…AKRFLELLDD (70 aa)) form the DRBM domain.

The protein belongs to the ribonuclease III family. In terms of assembly, homodimer. It depends on Mg(2+) as a cofactor.

It is found in the cytoplasm. It carries out the reaction Endonucleolytic cleavage to 5'-phosphomonoester.. Functionally, digests double-stranded RNA. Involved in the processing of primary rRNA transcript to yield the immediate precursors to the large and small rRNAs (23S and 16S). Processes some mRNAs, and tRNAs when they are encoded in the rRNA operon. Processes pre-crRNA and tracrRNA of type II CRISPR loci if present in the organism. The protein is Ribonuclease 3 of Coxiella burnetii (strain RSA 331 / Henzerling II).